The chain runs to 1237 residues: Anion exchange protein 2 (1237 aa).

Residues 1–237 form a disordered region; the sequence is MSSAPRRPAS…SYNLQERRRI (237 aa). Over 1–703 the chain is Cytoplasmic; sequence MSSAPRRPAS…SDFRDALDPQ (703 aa). Basic and acidic residues-rich tracts occupy residues 37-49 and 58-75; these read ELHRTLGVERFEE and GGEEPGRSYGEEDFEYHR. 2 stretches are compositionally biased toward basic residues: residues 76–85 and 94–110; these read QSSHHIHHPL and RRRKTPQGPGRKPRRRP. The residue at position 113 (serine 113) is a Phosphoserine. A compositionally biased stretch (acidic residues) spans 122–133; sequence EEGEEDEEEANE. Positions 137-151 are enriched in low complexity; sequence ARAPTEPSPASTPSS. Phosphoserine is present on residues serine 144, serine 170, and serine 172. Over residues 206-215 the composition is skewed to gly residues; that stretch reads TAGGDNGGAS. Residue serine 239 is modified to Phosphoserine. Position 253 is a phosphothreonine (threonine 253). Position 270 is an N6-methyllysine (lysine 270). A disordered region spans residues 281 to 316; sequence RRHLVRKNAKGSAQSSREGREPGPTPRSRPRAPHKP. Serine 439 bears the Phosphoserine mark. Residues 445 to 464 are disordered; sequence SLLGHHHGQGAESDPHVTEP. The next 4 helical transmembrane spans lie at 704 to 727, 733 to 770, 790 to 812, and 822 to 843; these read CVAAVIFIYFAALSPAITFGGLLG, LIGVSELIMSTALQGVIFCLLGAQPLLVIGFSGPLLVF, VWIGFWLVLLALLMVALEGSFLV, and IFAFLISLIFIYETFYKLIKIF. The membrane (anion exchange) stretch occupies residues 704–1237; it reads CVAAVIFIYF…DEYNEMPMPV (534 aa). The Extracellular segment spans residues 844–896; it reads QEHPLHGCSVSNSSETDSSENATWAGAGSTLGPANRSSAGQAGQGRPRGQPNT. 3 N-linked (GlcNAc...) asparagine glycosylation sites follow: asparagine 855, asparagine 864, and asparagine 878. A helical transmembrane segment spans residues 897 to 914; it reads ALLSLVLMAGTFFIAFFL. The Cytoplasmic portion of the chain corresponds to 915–929; that stretch reads RKFKNSRFFPGRIRR. Helical transmembrane passes span 930–950, 984–1006, 1032–1053, 1087–1132, and 1159–1195; these read VIGDFGVPIAILIMVLVDYSI, PFPVWMMVASLLPAILVFILIFM, LLLIVAMGGICALFGLPWLAAA, VTGL…IQFY, and MHLFTALQLLCLALLWAVMSTAASLAFPFILILTVPL. The S-palmitoyl cysteine moiety is linked to residue cysteine 1169.

It belongs to the anion exchanger (TC 2.A.31) family. Expressed in the ileum (at protein level).

The protein resides in the cell membrane. Its subcellular location is the apical cell membrane. It localises to the basolateral cell membrane. It carries out the reaction hydrogencarbonate(in) + chloride(out) = hydrogencarbonate(out) + chloride(in). Functionally, sodium-independent anion exchanger which mediates the electroneutral exchange of chloride for bicarbonate ions across the cell membrane. Plays an important role in osteoclast differentiation and function. Regulates bone resorption and calpain-dependent actin cytoskeleton organization in osteoclasts via anion exchange-dependent control of pH. Essential for intracellular pH regulation in CD8(+) T-cells upon CD3 stimulation, modulating CD8(+) T-cell response. The sequence is that of Anion exchange protein 2 (SLC4A2) from Oryctolagus cuniculus (Rabbit).